We begin with the raw amino-acid sequence, 92 residues long: DNA-directed RNA polymerase subunit Rpo11 (92 aa).

The protein belongs to the archaeal Rpo11/eukaryotic RPB11/RPC19 RNA polymerase subunit family. Part of the RNA polymerase complex.

Its subcellular location is the cytoplasm. It catalyses the reaction RNA(n) + a ribonucleoside 5'-triphosphate = RNA(n+1) + diphosphate. Its function is as follows. DNA-dependent RNA polymerase (RNAP) catalyzes the transcription of DNA into RNA using the four ribonucleoside triphosphates as substrates. This chain is DNA-directed RNA polymerase subunit Rpo11, found in Saccharolobus islandicus (strain Y.N.15.51 / Yellowstone #2) (Sulfolobus islandicus).